The primary structure comprises 186 residues: dTTP/UTP pyrophosphatase (186 aa).

Catalysis depends on aspartate 70, which acts as the Proton acceptor.

This sequence belongs to the Maf family. YhdE subfamily. It depends on a divalent metal cation as a cofactor.

The protein resides in the cytoplasm. The catalysed reaction is dTTP + H2O = dTMP + diphosphate + H(+). It carries out the reaction UTP + H2O = UMP + diphosphate + H(+). Its function is as follows. Nucleoside triphosphate pyrophosphatase that hydrolyzes dTTP and UTP. May have a dual role in cell division arrest and in preventing the incorporation of modified nucleotides into cellular nucleic acids. This is dTTP/UTP pyrophosphatase from Vibrio vulnificus (strain CMCP6).